We begin with the raw amino-acid sequence, 1014 residues long: Probable sucrose-phosphate synthase 5 (1014 aa).

2 stretches are compositionally biased toward basic and acidic residues: residues 29–41 (RRLE…REAA) and 49–58 (EGEKDGKPDT). 2 disordered regions span residues 29–108 (RRLE…SDEE) and 648–677 (QLLR…SSEP).

It belongs to the glycosyltransferase 1 family. Homodimer or homotetramer. Expressed in germinating seeds.

The catalysed reaction is beta-D-fructose 6-phosphate + UDP-alpha-D-glucose = sucrose 6(F)-phosphate + UDP + H(+). The protein operates within glycan biosynthesis; sucrose biosynthesis; sucrose from D-fructose 6-phosphate and UDP-alpha-D-glucose: step 1/2. With respect to regulation, activity is regulated by phosphorylation and moderated by concentration of metabolites and light. In terms of biological role, plays a role in photosynthetic sucrose synthesis by catalyzing the rate-limiting step of sucrose biosynthesis from UDP-glucose and fructose- 6-phosphate. Involved in the regulation of carbon partitioning in the leaves of plants. May regulate the synthesis of sucrose and therefore play a major role as a limiting factor in the export of photoassimilates out of the leaf. Plays a role for sucrose availability that is essential for plant growth and fiber elongation. The polypeptide is Probable sucrose-phosphate synthase 5 (SPS5) (Oryza sativa subsp. japonica (Rice)).